We begin with the raw amino-acid sequence, 491 residues long: Glutamine synthetase (491 aa).

In terms of domain architecture, GS beta-grasp spans Asn23–Gly111. A GS catalytic domain is found at Pro119–Ile491. Positions 143 and 145 each coordinate Mg(2+). An ATP-binding site is contributed by Glu225. Residues Glu230 and Glu238 each contribute to the Mg(2+) site. L-glutamate contacts are provided by residues Asn282 to Ala283 and Ala283. Residue His287 coordinates Mg(2+). ATP is bound by residues His289–Ser291 and Ser291. Residues Arg344, Glu350, and Arg362 each contribute to the L-glutamate site. Residues Arg362 and Arg367 each coordinate ATP. Glu381 lines the Mg(2+) pocket. Residue Arg383 coordinates L-glutamate.

The protein belongs to the glutamine synthetase family. As to quaternary structure, oligomer of 12 subunits arranged in the form of two hexagons. Mg(2+) serves as cofactor.

The protein resides in the cytoplasm. The enzyme catalyses L-glutamate + NH4(+) + ATP = L-glutamine + ADP + phosphate + H(+). Functionally, probably involved in nitrogen metabolism via ammonium assimilation. Catalyzes the ATP-dependent biosynthesis of glutamine from glutamate and ammonia. Beta-glutamate is a much poorer substrate than alpha-glutamate. In Archaeoglobus fulgidus (strain ATCC 49558 / DSM 4304 / JCM 9628 / NBRC 100126 / VC-16), this protein is Glutamine synthetase.